Here is a 228-residue protein sequence, read N- to C-terminus: DNA repair protein RecO (228 aa).

This sequence belongs to the RecO family.

Involved in DNA repair and RecF pathway recombination. The sequence is that of DNA repair protein RecO from Mannheimia succiniciproducens (strain KCTC 0769BP / MBEL55E).